An 89-amino-acid chain; its full sequence is Small ribosomal subunit protein uS15 (89 aa).

The tract at residues 1 to 23 (MALTKERTASVVQQYGSGEKDTG) is disordered.

It belongs to the universal ribosomal protein uS15 family. In terms of assembly, part of the 30S ribosomal subunit. Forms a bridge to the 50S subunit in the 70S ribosome, contacting the 23S rRNA.

One of the primary rRNA binding proteins, it binds directly to 16S rRNA where it helps nucleate assembly of the platform of the 30S subunit by binding and bridging several RNA helices of the 16S rRNA. Functionally, forms an intersubunit bridge (bridge B4) with the 23S rRNA of the 50S subunit in the ribosome. The sequence is that of Small ribosomal subunit protein uS15 from Treponema pallidum (strain Nichols).